A 565-amino-acid polypeptide reads, in one-letter code: MSQEFDYIIVGAGSAGNTLATRLTEDAGVTVLLLEAGGPDYRFDFRTQMPAALAFPLQGRRYNWAYETDPEPHMDGRRMECGRGKGLGGSSLINGMCYIRGNAMDFDGWAELPGLQDWTYLDCLPYFRKAETRDIGPNDYHGGEGPVSVATPKAGNNPLFHAMVEAGVQAGYPRTEDLNGYQQEGFGPMDRSVTKNGRRSSTARGYLDQAKKRPNLTIVTHALSDRVLFDGKRAVGVTYLVGDSEERVEARARKEVIVSSGAIASPQLLQRSGVGPRALLESLDIPVVHDLPGVGENLQDHLELYLQYACTQPVSLYPSLLWWNQPAIGAEWMFKGTGIGASNQFEAGGFIRTRPEFKWPNIQYHFLPVAINYNGSNGVKEHGFQAHMGSMRSPARGRIQAKSKDPRQHPSILFNYMSTEQDWQEFRDGIRLTREIMAQPALDPYRGREISPGADVQTDEQLDKFIREHAETAFHPSCSCKMGTDDMAVVDGEGRVHGMKGLRVVDASIMPLIITGNLNATTIMIAEKISDKIRGRKPLPRSTAKYYVAGDAPVKGKPMREVKQA.

FAD is bound at residue 6–35 (DYIIVGAGSAGNTLATRLTEDAGVTVLLLE). Catalysis depends on H475, which acts as the Proton acceptor.

It belongs to the GMC oxidoreductase family. Requires FAD as cofactor.

The catalysed reaction is choline + A = betaine aldehyde + AH2. It carries out the reaction betaine aldehyde + NAD(+) + H2O = glycine betaine + NADH + 2 H(+). Its pathway is amine and polyamine biosynthesis; betaine biosynthesis via choline pathway; betaine aldehyde from choline (cytochrome c reductase route): step 1/1. Involved in the biosynthesis of the osmoprotectant glycine betaine. Catalyzes the oxidation of choline to betaine aldehyde and betaine aldehyde to glycine betaine at the same rate. This chain is Oxygen-dependent choline dehydrogenase, found in Pseudomonas putida (strain GB-1).